We begin with the raw amino-acid sequence, 274 residues long: Mitochondrial S-adenosylmethionine carrier protein (274 aa).

Solcar repeat units lie at residues 4–77 (PGFT…VKSL), 86–168 (FKPV…LKAL), and 177–265 (VDSW…ARSL). The next 6 helical transmembrane spans lie at 5–25 (GFTA…LILF), 49–69 (IYAG…AFFL), 85–105 (HFKP…ACLI), 142–162 (RGYK…FPLW), 182–202 (SAVC…PLDV), and 238–258 (FAGV…FLGA).

The protein belongs to the mitochondrial carrier (TC 2.A.29) family.

Its subcellular location is the mitochondrion inner membrane. The catalysed reaction is S-adenosyl-L-homocysteine(out) + S-adenosyl-L-methionine(in) = S-adenosyl-L-homocysteine(in) + S-adenosyl-L-methionine(out). Its function is as follows. Mitochondrial S-adenosyl-L-methionine/S-adenosyl-L-homocysteine antiporter. Mediates the exchange of cytosolic S-adenosyl-L-methionine, the predominant methyl-group donor for macromolecule methylation processes, for mitochondrial S-adenosylhomocysteine(SAH), a by-product of methylation reactions. In Mus musculus (Mouse), this protein is Mitochondrial S-adenosylmethionine carrier protein.